A 148-amino-acid chain; its full sequence is 3-hydroxyacyl-[acyl-carrier-protein] dehydratase FabZ (148 aa).

Histidine 48 is an active-site residue.

This sequence belongs to the thioester dehydratase family. FabZ subfamily.

It is found in the cytoplasm. The catalysed reaction is a (3R)-hydroxyacyl-[ACP] = a (2E)-enoyl-[ACP] + H2O. In terms of biological role, involved in unsaturated fatty acids biosynthesis. Catalyzes the dehydration of short chain beta-hydroxyacyl-ACPs and long chain saturated and unsaturated beta-hydroxyacyl-ACPs. The protein is 3-hydroxyacyl-[acyl-carrier-protein] dehydratase FabZ of Campylobacter curvus (strain 525.92).